Reading from the N-terminus, the 384-residue chain is L-type lectin-like domain-containing protein C4F6.05c (384 aa).

The first 19 residues, 1–19, serve as a signal peptide directing secretion; the sequence is MKFCSLFHVLSFCCTLAYA. In terms of domain architecture, L-type lectin-like spans 20–224; the sequence is VPKSQFLQLH…DLVALSNLNI (205 aa). Topologically, residues 20-353 are extracellular; sequence VPKSQFLQLH…AMGNAYSPYN (334 aa). The tract at residues 227 to 251 is disordered; the sequence is PDTSNNENLNPTSNTKQSVGDNTSP. A helical membrane pass occupies residues 354 to 374; it reads LTNFMVFLLLGAIVSYGIMLV. Over 375-384 the chain is Cytoplasmic; the sequence is RRDRRRHKYL.

The protein localises to the membrane. Its subcellular location is the endoplasmic reticulum. It is found in the golgi apparatus. In Schizosaccharomyces pombe (strain 972 / ATCC 24843) (Fission yeast), this protein is L-type lectin-like domain-containing protein C4F6.05c.